The following is a 411-amino-acid chain: Ribose-phosphate pyrophosphokinase 3, chloroplastic (411 aa).

The N-terminal 39 residues, 1–39 (MAAISPANATTAASLSLPQFSSTSSSLSSSSSPSFLNFK), are a transit peptide targeting the chloroplast. Mg(2+) contacts are provided by aspartate 231 and histidine 233. The segment at 314 to 329 (GRHVVIVDDLVQSGGT) is binding of phosphoribosylpyrophosphate.

This sequence belongs to the ribose-phosphate pyrophosphokinase family.

It localises to the plastid. The protein resides in the chloroplast. It catalyses the reaction D-ribose 5-phosphate + ATP = 5-phospho-alpha-D-ribose 1-diphosphate + AMP + H(+). The protein is Ribose-phosphate pyrophosphokinase 3, chloroplastic (PRS3) of Arabidopsis thaliana (Mouse-ear cress).